The chain runs to 300 residues: Phosphatidylserine decarboxylase proenzyme (300 aa).

Catalysis depends on charge relay system; for autoendoproteolytic cleavage activity residues D117, H173, and S260. The active-site Schiff-base intermediate with substrate; via pyruvic acid; for decarboxylase activity is the S260. The residue at position 260 (S260) is a Pyruvic acid (Ser); by autocatalysis.

It belongs to the phosphatidylserine decarboxylase family. PSD-B subfamily. Prokaryotic type II sub-subfamily. In terms of assembly, heterodimer of a large membrane-associated beta subunit and a small pyruvoyl-containing alpha subunit. Pyruvate serves as cofactor. Post-translationally, is synthesized initially as an inactive proenzyme. Formation of the active enzyme involves a self-maturation process in which the active site pyruvoyl group is generated from an internal serine residue via an autocatalytic post-translational modification. Two non-identical subunits are generated from the proenzyme in this reaction, and the pyruvate is formed at the N-terminus of the alpha chain, which is derived from the carboxyl end of the proenzyme. The autoendoproteolytic cleavage occurs by a canonical serine protease mechanism, in which the side chain hydroxyl group of the serine supplies its oxygen atom to form the C-terminus of the beta chain, while the remainder of the serine residue undergoes an oxidative deamination to produce ammonia and the pyruvoyl prosthetic group on the alpha chain. During this reaction, the Ser that is part of the protease active site of the proenzyme becomes the pyruvoyl prosthetic group, which constitutes an essential element of the active site of the mature decarboxylase.

The protein localises to the cell membrane. The catalysed reaction is a 1,2-diacyl-sn-glycero-3-phospho-L-serine + H(+) = a 1,2-diacyl-sn-glycero-3-phosphoethanolamine + CO2. The protein operates within phospholipid metabolism; phosphatidylethanolamine biosynthesis; phosphatidylethanolamine from CDP-diacylglycerol: step 2/2. Catalyzes the formation of phosphatidylethanolamine (PtdEtn) from phosphatidylserine (PtdSer). This Fusobacterium nucleatum subsp. nucleatum (strain ATCC 25586 / DSM 15643 / BCRC 10681 / CIP 101130 / JCM 8532 / KCTC 2640 / LMG 13131 / VPI 4355) protein is Phosphatidylserine decarboxylase proenzyme.